The primary structure comprises 1147 residues: ATP-dependent helicase/deoxyribonuclease subunit B (1147 aa).

8–15 contacts ATP; that stretch reads GRAGSGKS. [4Fe-4S] cluster is bound by residues Cys-786, Cys-1106, Cys-1109, and Cys-1115.

Belongs to the helicase family. AddB/RexB type 1 subfamily. As to quaternary structure, heterodimer of AddA and AddB. Requires Mg(2+) as cofactor. The cofactor is [4Fe-4S] cluster.

Its function is as follows. The heterodimer acts as both an ATP-dependent DNA helicase and an ATP-dependent, dual-direction single-stranded exonuclease. Recognizes the chi site generating a DNA molecule suitable for the initiation of homologous recombination. The AddB subunit has 5' -&gt; 3' nuclease activity but not helicase activity. In Clostridium botulinum (strain Loch Maree / Type A3), this protein is ATP-dependent helicase/deoxyribonuclease subunit B.